The primary structure comprises 509 residues: Maturase K (509 aa).

This sequence belongs to the intron maturase 2 family. MatK subfamily.

The protein localises to the plastid. Its subcellular location is the chloroplast. Its function is as follows. Usually encoded in the trnK tRNA gene intron. Probably assists in splicing its own and other chloroplast group II introns. The sequence is that of Maturase K from Anthocercis angustifolia (Narrow-leaf ray-flower).